The sequence spans 637 residues: Formate--tetrahydrofolate ligase (637 aa).

81–88 (TPLGEGKS) provides a ligand contact to ATP.

This sequence belongs to the formate--tetrahydrofolate ligase family. As to quaternary structure, homodimer.

It catalyses the reaction (6S)-5,6,7,8-tetrahydrofolate + formate + ATP = (6R)-10-formyltetrahydrofolate + ADP + phosphate. It functions in the pathway one-carbon metabolism; tetrahydrofolate interconversion. This chain is Formate--tetrahydrofolate ligase, found in Spinacia oleracea (Spinach).